The chain runs to 1313 residues: Kinesin-like protein KIN-12B (1313 aa).

The tract at residues Met1–Leu74 is disordered. The segment covering Glu17–Thr26 has biased composition (polar residues). Residues Gly96–Ile431 form the Kinesin motor domain. Residue Gly170–Thr177 coordinates ATP. Microtubules-binding stretches follow at residues Ser298 to His302, Val331 to Glu337, and His380 to Arg384. The interval Lys429–Gly467 is neck. A disordered region spans residues Glu685–Lys709. Residues Arg699–Gln708 are compositionally biased toward polar residues. Coiled coils occupy residues Leu932 to Ser1003, Ala1062 to Glu1130, and Glu1167 to Ser1241.

This sequence belongs to the TRAFAC class myosin-kinesin ATPase superfamily. Kinesin family. KIN-12 subfamily. In terms of assembly, homodimer and heterodimer with KIN12A. Interacts with TIO.

It is found in the cytoplasm. It localises to the cytoskeleton. The protein localises to the phragmoplast. Its function is as follows. Plus-end directed kinesin-like motor enzyme that plays a critical role in the organization of phragmoplast microtubules during cytokinesis. Constitutes a signaling module in association with serine/threonine-protein kinase TIO that is required to support phragmoplast expansion and cell-plate growth in plant cells. The sequence is that of Kinesin-like protein KIN-12B from Arabidopsis thaliana (Mouse-ear cress).